A 162-amino-acid polypeptide reads, in one-letter code: Disulfide bond formation protein B (162 aa).

The Cytoplasmic portion of the chain corresponds to 1–8; the sequence is MTPLFRKA. A helical transmembrane segment spans residues 9 to 25; the sequence is VWLLFAVSVCAFAGSLA. The Periplasmic segment spans residues 26–43; the sequence is AQYVLGMEPCVLCISQRL. A disulfide bond links Cys-35 and Cys-38. Residues 44-60 traverse the membrane as a helical segment; sequence CVLATALCTAIVLMCRP. Topologically, residues 61–67 are cytoplasmic; it reads RRRAGGL. The chain crosses the membrane as a helical span at residues 68–85; the sequence is FGAVFISIPAVTGISVAA. The Periplasmic segment spans residues 86–141; that stretch reads YQLWLQSLPPGTAPSCGAPWTFRLKGWSLFDWFEPVVRGFGNCAEPDYLLGVALPV. Cysteines 101 and 128 form a disulfide. The chain crosses the membrane as a helical span at residues 142–160; it reads WSAAYFLAVVLTVWWAWAR. The Cytoplasmic portion of the chain corresponds to 161–162; the sequence is AK.

The protein belongs to the DsbB family.

It localises to the cell inner membrane. Its function is as follows. Required for disulfide bond formation in some periplasmic proteins. Acts by oxidizing the DsbA protein. This is Disulfide bond formation protein B from Neisseria meningitidis serogroup C / serotype 2a (strain ATCC 700532 / DSM 15464 / FAM18).